The following is a 519-amino-acid chain: Importin subunit alpha-9 (519 aa).

Residues 1–29 are disordered; that stretch reads MADDGSASNRRDPIKSSVGNVAGQRRRKQ. 8 ARM repeats span residues 116–156, 158–197, 200–239, 244–283, 286–326, 335–374, 377–416, and 429–468; these read FPPV…NIAA, KPEE…NVAG, EDLR…NLIK, KAAA…YLSA, DIAT…NFVA, ILIR…NIAA, IEHK…NLCV, and QEHL…LVLR.

The protein belongs to the importin alpha family. In terms of assembly, forms a complex with importin subunit beta-1.

The protein resides in the nucleus envelope. Functionally, binds to conventional NLS motifs and mediates nuclear protein import across the nuclear envelope. Acts as a cellular receptor for the nuclear import of the virD2 protein of Agrobacterium, but is not essential for Agrobacterium-mediated root transformation. In Arabidopsis thaliana (Mouse-ear cress), this protein is Importin subunit alpha-9.